A 52-amino-acid polypeptide reads, in one-letter code: Lysis protein for colicin N (52 aa).

An N-terminal signal peptide occupies residues 1–17; the sequence is MCGKILLILFFIMTLSA. Cys18 is lipidated: N-palmitoyl cysteine. Cys18 carries the S-diacylglycerol cysteine lipid modification.

It is found in the cell outer membrane. Functionally, lysis proteins are required for both colicin release and partial cell lysis. In Escherichia coli, this protein is Lysis protein for colicin N (cnl).